Here is a 317-residue protein sequence, read N- to C-terminus: Transcription factor EC (317 aa).

The necessary for transcriptional transactivation stretch occupies residues 1 to 90; the sequence is MTLDHRLFSQ…GLMNASCPSI (90 aa). The bHLH domain occupies 110–163; it reads QKKDNHNLIERRRRYNINYRIKELGTLIPKSNDPDIRWNKGTILKASVDYIKWL. The segment at 242–317 is necessary for transcriptional transactivation; that stretch reads TSPEFYEQAV…SLSSEDGDEL (76 aa).

Belongs to the MiT/TFE family. Homodimer. Forms heterodimers with TFE3. Forms heterodimers with MITF. Interacts with MITF. In terms of tissue distribution, expressed in kidney, spleen, lung, liver, testis and muscle.

Its subcellular location is the nucleus. Its function is as follows. Transcriptional regulator that acts as a repressor or an activator. Acts as a transcriptional repressor on minimal promoter containing mu E3 enhancer sequence. Binds to mu E3 DNA sequence of the immunoglobulin heavy-chain gene enhancer. Acts as a transcriptional transactivator on the proximal promoter region of the tartrate-resistant acid phosphatase (TRAP) E-box containing promoter. Collaborates with MITF in target gene activation. Acts as a transcriptional repressor on minimal promoter containing mu E3 enhancer sequence. Binds to mu E3 DNA sequence of the immunoglobulin heavy-chain gene enhancer. Binds DNA in a homo- or heterodimeric form. The polypeptide is Transcription factor EC (Tfec) (Rattus norvegicus (Rat)).